A 623-amino-acid polypeptide reads, in one-letter code: Chaperone protein DnaK (623 aa).

At threonine 175 the chain carries Phosphothreonine; by autocatalysis. Positions 578-623 are disordered; it reads ANPEGAPGAGFDPNNMGGANAGNASAGNDKKDDNVVDADFKVEDDK. Residues 591 to 604 show a composition bias toward low complexity; that stretch reads NNMGGANAGNASAG. Basic and acidic residues predominate over residues 605-623; sequence NDKKDDNVVDADFKVEDDK.

It belongs to the heat shock protein 70 family.

Acts as a chaperone. The polypeptide is Chaperone protein DnaK (Clostridium botulinum (strain 657 / Type Ba4)).